A 504-amino-acid chain; its full sequence is MTTNNGFDSLHSHAQRLKGASIPGLLAAEPGRVQDLALRVGPLYVNFARQKYDAAALQALLALAADRDVGGAITRLFRGEQVNLTEGRAALHTALRGDVVDAPVAAEAYATAREIRQRMGVLVRALEDSGVTDVVSVGIGGSDLGPRLVADALRPVSGARLRVHFVSNVDGAAMQRTLATLDPAKTAGILISKTFGTQETLLNGQILHDWLGGSDRLYAVSANPERAAKAFAIAADRVLPMWDWVGGRYSLWSAVGFPIALAIGFERFEQLLEGAAQMDAHALDAPLERNLPVLHGLTDIWNRNLLGHATHAVMTYDQRLALLPAYLQQLVMESLGKRVQRDGQPVTTDTVPVWWGGAGTDVQHSFFQALHQGTSIVPADFIGCVHNDDPYTINHQALLANLLAQTEALANGQGSDDPHRDYPGGRPSTLILLDALTPQALGALIAMYEHAVYVQSVIWNINAFDQFGVELGKQLASGLLPALQGEDVAVADPMTREILAQLKG.

The Proton donor role is filled by glutamate 333. Active-site residues include histidine 364 and lysine 473.

The protein belongs to the GPI family.

The protein resides in the cytoplasm. It carries out the reaction alpha-D-glucose 6-phosphate = beta-D-fructose 6-phosphate. It functions in the pathway carbohydrate biosynthesis; gluconeogenesis. Its pathway is carbohydrate degradation; glycolysis; D-glyceraldehyde 3-phosphate and glycerone phosphate from D-glucose: step 2/4. Functionally, catalyzes the reversible isomerization of glucose-6-phosphate to fructose-6-phosphate. The protein is Glucose-6-phosphate isomerase of Stenotrophomonas maltophilia (strain K279a).